The following is a 341-amino-acid chain: Ribosomal RNA small subunit methyltransferase C (341 aa).

This sequence belongs to the methyltransferase superfamily. RsmC family. As to quaternary structure, monomer.

It is found in the cytoplasm. The enzyme catalyses guanosine(1207) in 16S rRNA + S-adenosyl-L-methionine = N(2)-methylguanosine(1207) in 16S rRNA + S-adenosyl-L-homocysteine + H(+). Specifically methylates the guanine in position 1207 of 16S rRNA in the 30S particle. The chain is Ribosomal RNA small subunit methyltransferase C from Vibrio parahaemolyticus serotype O3:K6 (strain RIMD 2210633).